The primary structure comprises 556 residues: Neurofilament light polypeptide (556 aa).

Residue S2 is modified to N-acetylserine. Residues 2 to 94 (SSYGYDPFFP…KSIRSQERAQ (93 aa)) are head. An IF rod domain is found at 91–402 (ERAQLQDLND…KLLEGEETRL (312 aa)). Positions 95–126 (LQDLNDRFACFIERVHELEQQNKVLEAELLVL) are coil 1A. The tract at residues 127-139 (RQKHAEPSRFRAL) is linker 1. The tract at residues 140-235 (YEQEIRELRL…KVHEEELAEL (96 aa)) is coil 1B. The tract at residues 236–254 (QAQIQYAHLSVEMDVSAKP) is linker 12. Positions 255–273 (DLSAALRDIRAQYEKLAAR) are coil 2A. The interval 274 to 282 (NMQNAEEWF) is linker 2. The segment at 283-398 (RSRFTVLSES…AAYRKLLEGE (116 aa)) is coil 2B. The tail, subdomain A stretch occupies residues 399–445 (ETRLSFTSVGSITSGYTQTAPTFGRSAYSGLQSTSYLMTTRSFPTYY). Residues 399–556 (ETRLSFTSVG…KEETEVKKKA (158 aa)) are tail. The interval 446–556 (SSHVQEEQIE…KEETEVKKKA (111 aa)) is tail, subdomain B (acidic). Positions 464-473 (KAGEAKAAPA) are enriched in low complexity. Residues 464–556 (KAGEAKAAPA…KEETEVKKKA (93 aa)) form a disordered region. Positions 474 to 540 (EEGEEEEKEE…AEETGEEEKE (67 aa)) are enriched in acidic residues. The segment covering 541-556 (EKEAAGKEETEVKKKA) has biased composition (basic and acidic residues).

The protein belongs to the intermediate filament family. In terms of assembly, forms homodimers (in vitro).

It is found in the cell projection. It localises to the axon. The protein resides in the cytoplasm. The protein localises to the cytoskeleton. Functionally, neurofilaments usually contain three intermediate filament proteins: NEFL, NEFM, and NEFH which are involved in the maintenance of neuronal caliber. May additionally cooperate with the neuronal intermediate filament proteins to form neuronal filamentous networks. This Coturnix japonica (Japanese quail) protein is Neurofilament light polypeptide (NEFL).